Consider the following 236-residue polypeptide: Demethylmenaquinone methyltransferase (236 aa).

S-adenosyl-L-methionine-binding positions include Thr58, Asp79, and 106-107; that span reads NA.

The protein belongs to the class I-like SAM-binding methyltransferase superfamily. MenG/UbiE family.

The catalysed reaction is a 2-demethylmenaquinol + S-adenosyl-L-methionine = a menaquinol + S-adenosyl-L-homocysteine + H(+). It functions in the pathway quinol/quinone metabolism; menaquinone biosynthesis; menaquinol from 1,4-dihydroxy-2-naphthoate: step 2/2. Functionally, methyltransferase required for the conversion of demethylmenaquinol (DMKH2) to menaquinol (MKH2). The protein is Demethylmenaquinone methyltransferase of Listeria welshimeri serovar 6b (strain ATCC 35897 / DSM 20650 / CCUG 15529 / CIP 8149 / NCTC 11857 / SLCC 5334 / V8).